A 205-amino-acid chain; its full sequence is Thiamine-phosphate synthase (205 aa).

4-amino-2-methyl-5-(diphosphooxymethyl)pyrimidine contacts are provided by residues 35-39 (QYRDK) and Asn-67. Mg(2+) is bound by residues Asp-68 and Asp-86. 4-amino-2-methyl-5-(diphosphooxymethyl)pyrimidine is bound at residue Thr-105. A 2-[(2R,5Z)-2-carboxy-4-methylthiazol-5(2H)-ylidene]ethyl phosphate-binding site is contributed by 132 to 134 (SLT). Position 135 (Lys-135) interacts with 4-amino-2-methyl-5-(diphosphooxymethyl)pyrimidine. Gly-162 contributes to the 2-[(2R,5Z)-2-carboxy-4-methylthiazol-5(2H)-ylidene]ethyl phosphate binding site.

Belongs to the thiamine-phosphate synthase family. Requires Mg(2+) as cofactor.

The catalysed reaction is 2-[(2R,5Z)-2-carboxy-4-methylthiazol-5(2H)-ylidene]ethyl phosphate + 4-amino-2-methyl-5-(diphosphooxymethyl)pyrimidine + 2 H(+) = thiamine phosphate + CO2 + diphosphate. It catalyses the reaction 2-(2-carboxy-4-methylthiazol-5-yl)ethyl phosphate + 4-amino-2-methyl-5-(diphosphooxymethyl)pyrimidine + 2 H(+) = thiamine phosphate + CO2 + diphosphate. The enzyme catalyses 4-methyl-5-(2-phosphooxyethyl)-thiazole + 4-amino-2-methyl-5-(diphosphooxymethyl)pyrimidine + H(+) = thiamine phosphate + diphosphate. The protein operates within cofactor biosynthesis; thiamine diphosphate biosynthesis; thiamine phosphate from 4-amino-2-methyl-5-diphosphomethylpyrimidine and 4-methyl-5-(2-phosphoethyl)-thiazole: step 1/1. Functionally, condenses 4-methyl-5-(beta-hydroxyethyl)thiazole monophosphate (THZ-P) and 2-methyl-4-amino-5-hydroxymethyl pyrimidine pyrophosphate (HMP-PP) to form thiamine monophosphate (TMP). This is Thiamine-phosphate synthase from Pseudomonas savastanoi pv. phaseolicola (strain 1448A / Race 6) (Pseudomonas syringae pv. phaseolicola (strain 1448A / Race 6)).